Consider the following 345-residue polypeptide: Phosphate acyltransferase (345 aa).

It belongs to the PlsX family. In terms of assembly, homodimer. Probably interacts with PlsY.

It localises to the cytoplasm. The catalysed reaction is a fatty acyl-[ACP] + phosphate = an acyl phosphate + holo-[ACP]. Its pathway is lipid metabolism; phospholipid metabolism. Catalyzes the reversible formation of acyl-phosphate (acyl-PO(4)) from acyl-[acyl-carrier-protein] (acyl-ACP). This enzyme utilizes acyl-ACP as fatty acyl donor, but not acyl-CoA. The sequence is that of Phosphate acyltransferase from Wolbachia sp. subsp. Brugia malayi (strain TRS).